Reading from the N-terminus, the 108-residue chain is CDGSH iron-sulfur domain-containing protein 1 (108 aa).

Residues 14-31 (IAAVTFAAGTAALGYLAY) traverse the membrane as a helical; Signal-anchor for type III membrane protein segment. At 32–108 (KKFYAKENRT…GPLIIKKKET (77 aa)) the chain is on the cytoplasmic side. A Glycyl lysine isopeptide (Lys-Gly) (interchain with G-Cter in ubiquitin) cross-link involves residue Lys42. Lys55 serves as the catalytic Schiff-base intermediate with pyridoxal 5'-phosphate. Lys55 and Lys68 each carry N6-acetyllysine; alternate. Glycyl lysine isopeptide (Lys-Gly) (interchain with G-Cter in ubiquitin); alternate cross-links involve residues Lys55 and Lys68. [2Fe-2S] cluster-binding residues include Cys72 and Cys74. Glycyl lysine isopeptide (Lys-Gly) (interchain with G-Cter in ubiquitin) cross-links involve residues Lys78 and Lys79. Cys83 and His87 together coordinate [2Fe-2S] cluster. Residue Lys89 forms a Glycyl lysine isopeptide (Lys-Gly) (interchain with G-Cter in ubiquitin) linkage. Position 104 is an N6-acetyllysine; alternate (Lys104). Lys104 participates in a covalent cross-link: Glycyl lysine isopeptide (Lys-Gly) (interchain with G-Cter in ubiquitin); alternate. Glycyl lysine isopeptide (Lys-Gly) (interchain with G-Cter in ubiquitin) cross-links involve residues Lys105 and Lys106.

This sequence belongs to the CISD protein family. In terms of assembly, homodimer. [2Fe-2S] cluster is required as a cofactor. The cofactor is pyridoxal 5'-phosphate. Post-translationally, ubiquitinated by PRKN during mitophagy, leading to its degradation and enhancement of mitophagy. Deubiquitinated by USP30. In terms of tissue distribution, liver, adipose, skeletal muscle and heart (at protein level). Widely expressed. Expressed at the highest levels in the heart.

The protein resides in the mitochondrion outer membrane. The catalysed reaction is L-cysteine + 2-oxoglutarate = 2-oxo-3-sulfanylpropanoate + L-glutamate. L-cysteine transaminase that catalyzes the reversible transfer of the amino group from L-cysteine to the alpha-keto acid 2-oxoglutarate to respectively form 2-oxo-3-sulfanylpropanoate and L-glutamate. The catalytic cycle occurs in the presence of pyridoxal 5'-phosphate (PLP) cofactor that facilitates transamination by initially forming an internal aldimine with the epsilon-amino group of active site Lys-55 residue on the enzyme (PLP-enzyme aldimine), subsequently displaced by formation of an external aldimine with the substrate amino group (PLP-L-cysteine aldimine). The external aldimine is further deprotonated to form a carbanion intermediate, which in the presence of 2-oxoglutarate regenerates PLP yielding final products 2-oxo-3-sulfanylpropanoate and L-glutamate. The proton transfer in carbanion intermediate is suggested to be controlled by the active site lysine residue, whereas PLP stabilizes carbanion structure through electron delocalization, also known as the electron sink effect. Plays a key role in regulating maximal capacity for electron transport and oxidative phosphorylation. May be involved in iron-sulfur cluster shuttling and/or in redox reactions. Can transfer the [2Fe-2S] cluster to an apo-acceptor protein only when in the oxidation state, likely serving as a redox sensor that regulates mitochondrial iron-sulfur cluster assembly and iron trafficking upon oxidative stress. This is CDGSH iron-sulfur domain-containing protein 1 (Cisd1) from Mus musculus (Mouse).